The following is a 391-amino-acid chain: DNA replication and repair protein RecF (391 aa).

Residue 30 to 37 (GLNGQGKT) participates in ATP binding.

Belongs to the RecF family.

The protein resides in the cytoplasm. In terms of biological role, the RecF protein is involved in DNA metabolism; it is required for DNA replication and normal SOS inducibility. RecF binds preferentially to single-stranded, linear DNA. It also seems to bind ATP. This is DNA replication and repair protein RecF from Kineococcus radiotolerans (strain ATCC BAA-149 / DSM 14245 / SRS30216).